The chain runs to 147 residues: Pathogenesis-related protein PR-4B (147 aa).

A signal peptide spans 1-25 (MERVNNYKLCVALLIMSVMMAMAAA). A Barwin domain is found at 26-147 (QSATNVRSTY…VNYEFVNCND (122 aa)). Intrachain disulfides connect Cys54–Cys86, Cys75–Cys109, and Cys89–Cys145.

Its subcellular location is the secreted. It localises to the cell wall. This Nicotiana tabacum (Common tobacco) protein is Pathogenesis-related protein PR-4B.